Reading from the N-terminus, the 262-residue chain is 3-deoxy-manno-octulosonate cytidylyltransferase (262 aa).

Belongs to the KdsB family.

The protein resides in the cytoplasm. It carries out the reaction 3-deoxy-alpha-D-manno-oct-2-ulosonate + CTP = CMP-3-deoxy-beta-D-manno-octulosonate + diphosphate. Its pathway is nucleotide-sugar biosynthesis; CMP-3-deoxy-D-manno-octulosonate biosynthesis; CMP-3-deoxy-D-manno-octulosonate from 3-deoxy-D-manno-octulosonate and CTP: step 1/1. It participates in bacterial outer membrane biogenesis; lipopolysaccharide biosynthesis. Its function is as follows. Activates KDO (a required 8-carbon sugar) for incorporation into bacterial lipopolysaccharide in Gram-negative bacteria. This chain is 3-deoxy-manno-octulosonate cytidylyltransferase, found in Acidovorax ebreus (strain TPSY) (Diaphorobacter sp. (strain TPSY)).